The sequence spans 1640 residues: RING finger protein 17 (1640 aa).

The RING-type zinc-finger motif lies at 30-73 (CTRCGRKVSVASGDHHKFPCGHAFCELCLLAPQEYTTSKCTDCE). Ser134 is subject to Phosphoserine. Lys229 bears the N6-acetyllysine mark. 2 disordered regions span residues 348–376 (TDET…TKEM) and 413–435 (DDPI…APVG). Basic and acidic residues predominate over residues 360 to 373 (APDRHLEGKKKQPT). 2 consecutive Tudor domains span residues 751–809 (CPLQ…FLEP) and 985–1044 (KWEC…LKTM). The segment covering 1170–1184 (NEHKVPDSKGKKSES) has biased composition (basic and acidic residues). The segment at 1170–1191 (NEHKVPDSKGKKSESRSTGCYR) is disordered. Tudor domains lie at 1246–1303 (SWKK…PDTP) and 1496–1556 (DFSS…LMQY).

Interacts with MXD1, MXD3, MXD4, MXI1 and PIWIL1. Self-associates. Expressed at high levels in adult testis. Expressed in male germ cells (at protein level). Expressed at lower levels in adult thyroid, submaxillary gland, ovary and epididymis.

The protein localises to the cytoplasm. It is found in the nucleus. Seems to be involved in regulation of transcriptional activity of MYC. In vitro, inhibits DNA-binding activity of Mad-MAX heterodimers. Can recruit Mad transcriptional repressors (MXD1, MXD3, MXD4 and MXI1) to the cytoplasm. May be involved in spermiogenesis. In Mus musculus (Mouse), this protein is RING finger protein 17 (Rnf17).